Here is a 346-residue protein sequence, read N- to C-terminus: Nitrilase 1 (346 aa).

Position 2 is an N-acetylserine (Ser-2). Residues 25-297 (VRVTIVQSST…EGLVTADIDL (273 aa)) enclose the CN hydrolase domain. Glu-65 functions as the Proton acceptor in the catalytic mechanism. The active-site Proton donor is Lys-152. Catalysis depends on Cys-186, which acts as the Nucleophile.

It belongs to the carbon-nitrogen hydrolase superfamily. Nitrilase family. Interacts with DEK3. In terms of tissue distribution, expressed in cotyledons, hypocotyls, leaves, roots, stems, flowers and siliques.

The catalysed reaction is a nitrile + 2 H2O = a carboxylate + NH4(+). In terms of biological role, can convert indole-3-acetonitrile to the plant hormone indole-3-acetic acid. The polypeptide is Nitrilase 1 (Arabidopsis thaliana (Mouse-ear cress)).